The sequence spans 386 residues: V-type proton ATPase subunit B 2 (386 aa).

The protein belongs to the ATPase alpha/beta chains family. V-ATPase is a heteromultimeric enzyme composed of a peripheral catalytic V1 complex (main components: subunits A, B, C, D, E, and F) attached to an integral membrane V0 proton pore complex (main component: the proteolipid protein).

Functionally, non-catalytic subunit of the peripheral V1 complex of vacuolar ATPase. V-ATPase is responsible for acidifying a variety of intracellular compartments in eukaryotic cells. This Gossypium hirsutum (Upland cotton) protein is V-type proton ATPase subunit B 2.